Here is a 200-residue protein sequence, read N- to C-terminus: Probable molybdenum cofactor guanylyltransferase (200 aa).

Residues 9-11, lysine 21, aspartate 69, and aspartate 100 each bind GTP; that span reads LAG. Aspartate 100 serves as a coordination point for Mg(2+).

It belongs to the MobA family. It depends on Mg(2+) as a cofactor.

It is found in the cytoplasm. It carries out the reaction Mo-molybdopterin + GTP + H(+) = Mo-molybdopterin guanine dinucleotide + diphosphate. Its function is as follows. Transfers a GMP moiety from GTP to Mo-molybdopterin (Mo-MPT) cofactor (Moco or molybdenum cofactor) to form Mo-molybdopterin guanine dinucleotide (Mo-MGD) cofactor. This is Probable molybdenum cofactor guanylyltransferase from Bacillus cereus (strain Q1).